Here is a 328-residue protein sequence, read N- to C-terminus: Formimidoylglutamase (328 aa).

The Mn(2+) site is built by His-133, Asp-159, His-161, Asp-163, Asp-253, and Asp-255.

This sequence belongs to the arginase family. It depends on Mn(2+) as a cofactor.

It catalyses the reaction N-formimidoyl-L-glutamate + H2O = formamide + L-glutamate. The protein operates within amino-acid degradation; L-histidine degradation into L-glutamate; L-glutamate from N-formimidoyl-L-glutamate (hydrolase route): step 1/1. In terms of biological role, catalyzes the conversion of N-formimidoyl-L-glutamate to L-glutamate and formamide. The sequence is that of Formimidoylglutamase from Streptococcus pyogenes serotype M6 (strain ATCC BAA-946 / MGAS10394).